Reading from the N-terminus, the 206-residue chain is Small ribosomal subunit protein uS4 (206 aa).

Residues 94-157 (RRLDNVVYRL…RSRTYFKNLV (64 aa)) form the S4 RNA-binding domain.

This sequence belongs to the universal ribosomal protein uS4 family. Part of the 30S ribosomal subunit. Contacts protein S5. The interaction surface between S4 and S5 is involved in control of translational fidelity.

Functionally, one of the primary rRNA binding proteins, it binds directly to 16S rRNA where it nucleates assembly of the body of the 30S subunit. Its function is as follows. With S5 and S12 plays an important role in translational accuracy. This is Small ribosomal subunit protein uS4 from Chloroflexus aurantiacus (strain ATCC 29364 / DSM 637 / Y-400-fl).